A 123-amino-acid polypeptide reads, in one-letter code: Thioredoxin H-type 1 (123 aa).

Ala2 carries the post-translational modification N-acetylalanine. Residues 2-119 (AATAEVIPAG…IEAKLLKHSQ (118 aa)) form the Thioredoxin domain. A disulfide bond links Cys45 and Cys48.

Belongs to the thioredoxin family. Plant H-type subfamily.

The protein resides in the cytoplasm. In terms of biological role, participates in various redox reactions through the reversible oxidation of the active center dithiol to a disulfide. The H form is known to activate a number of cytosolic enzymes. The chain is Thioredoxin H-type 1 (THL-1) from Brassica napus (Rape).